The sequence spans 423 residues: ATP-dependent Clp protease ATP-binding subunit ClpX (423 aa).

Residues 1 to 50 enclose the ClpX-type ZB domain; sequence MTDDTEYRCSFCGKEHHQVDDLIAGPDVRICSECVVLSCEIVEDRRNEAL. Zn(2+) is bound by residues cysteine 9, cysteine 12, cysteine 31, and cysteine 34. 126 to 133 is an ATP binding site; it reads PTGCGKTY.

It belongs to the ClpX chaperone family. Component of the ClpX-ClpP complex. Forms a hexameric ring that, in the presence of ATP, binds to fourteen ClpP subunits assembled into a disk-like structure with a central cavity, resembling the structure of eukaryotic proteasomes.

Functionally, ATP-dependent specificity component of the Clp protease. It directs the protease to specific substrates. Can perform chaperone functions in the absence of ClpP. This chain is ATP-dependent Clp protease ATP-binding subunit ClpX, found in Tropheryma whipplei (strain Twist) (Whipple's bacillus).